The following is a 1212-amino-acid chain: Solute carrier family 12 member 2 (1212 aa).

Met1 carries the N-acetylmethionine modification. The Cytoplasmic segment spans residues 1–286; the sequence is MEPRPTAPSS…AESKGVVKFG (286 aa). 3 disordered regions span residues 36 to 81, 112 to 138, and 150 to 193; these read GTAV…QSRF, GAKQTPADGEASGESEPAKGSEEAKGR, and SSAE…GGGS. 2 positions are modified to phosphoserine: Ser77 and Ser79. An RFXV motif 1 motif is present at residues 80-83; the sequence is RFQV. Residues 127-137 show a composition bias toward basic and acidic residues; it reads EPAKGSEEAKG. The short motif at 138 to 141 is the RFXV motif 2 element; that stretch reads RFRV. Positions 150 to 160 are enriched in low complexity; sequence SSAEDSLSDAA. Phosphothreonine; by OXSR1 and STK39 is present on residues Thr203, Thr207, and Thr212. Phosphothreonine occurs at positions 217 and 230. Ser242 is modified (phosphoserine). Thr266 bears the Phosphothreonine mark. The chain crosses the membrane as a discontinuously helical span at residues 287 to 316; it reads WIKGVLVRCMLNIWGVMLFIRLSWIVGQAG. Leu297 is a Na(+) binding site. 2 residues coordinate K(+): Asn298 and Ile299. Trp300 provides a ligand contact to Na(+). Positions 301, 302, and 303 each coordinate chloride. The chain crosses the membrane as a helical span at residues 317–336; sequence IGLSVLVIMMATVVTTITGL. At 337–367 the chain is on the cytoplasmic side; sequence STSAIATNGFVRGGGAYYLISRSLGPEFGGA. Residues 368–395 traverse the membrane as a helical segment; that stretch reads IGLIFAFANAVAVAMYVVGFAETVVELL. Phe372 contributes to the chloride binding site. Tyr383 serves as a coordination point for K(+). Residues 396 to 405 lie on the Extracellular side of the membrane; it reads KEHSILMIDE. The chain crosses the membrane as a helical span at residues 406-429; that stretch reads INDIRIIGAITVVILLGISVAGME. The Cytoplasmic segment spans residues 430-432; that stretch reads WEA. A helical transmembrane segment spans residues 433 to 454; sequence KAQIVLLVILLLAIGDFVIGTF. Residues 455–486 lie on the Extracellular side of the membrane; that stretch reads IPLESKKPKGFFGYKSEIFNENFGPDFREEET. The discontinuously helical transmembrane segment at 487 to 504 threads the bilayer; sequence FFSVFAIFFPAATGILAG. K(+) contacts are provided by Pro496, Ala497, and Thr499. Pro496 and Ala497 together coordinate chloride. The chloride site is built by Gly500 and Ile501. Residues 505–519 are Cytoplasmic-facing; the sequence is ANISGDLADPQSAIP. A helical transmembrane segment spans residues 520–541; the sequence is KGTLLAILITTLVYVGIAVSVG. At 542–598 the chain is on the extracellular side; that stretch reads SCVVRDATGNVNDTIVTELTNCTSAACKLNFDFSSCESSPCSYGLMNNFQVMSMVSG. N-linked (GlcNAc...) asparagine glycosylation is found at Asn553 and Asn562. 2 disulfide bridges follow: Cys563–Cys568 and Cys577–Cys582. The chain crosses the membrane as a helical span at residues 599-623; the sequence is FTPLISAGIFSATLSSALASLVSAP. Na(+) is bound by residues Ala610, Ser613, and Ser614. Topologically, residues 624 to 651 are cytoplasmic; sequence KIFQALCKDNIYPAFQMFAKGYGKNNEP. The next 2 membrane-spanning stretches (helical) occupy residues 652–672 and 673–691; these read LRGYILTFLIALGFILIAELN and VIAPIISNFFLASYALINF. Residues Phe682 and Tyr686 each coordinate chloride. Residues 692–714 are Cytoplasmic-facing; that stretch reads SVFHASLAKSPGWRPAFKYYNMW. 2 helical membrane passes run 715 to 732 and 733 to 745; these read ISLLGAILCCIVMFVINW and WAALLTYVIVLGL. The Cytoplasmic segment spans residues 746-1212; that stretch reads YIYVTYKKPD…NHQSVLTFYS (467 aa). The tract at residues 761–778 is scissor helix; it reads STQALTYLNALQHSIRLS. Ser940 and Ser944 each carry phosphoserine. Over residues 962-978 the composition is skewed to basic and acidic residues; that stretch reads LDTSKPLSEKPITHKVE. The tract at residues 962 to 989 is disordered; the sequence is LDTSKPLSEKPITHKVEEEDGKTATQPL. Position 994 is a phosphoserine (Ser994).

The protein belongs to the SLC12A transporter family. Homodimer; adopts a domain-swap conformation at the scissor helices connecting the transmembrane domain and C-terminal domain. Post-translationally, phosphorylated at Thr-203, Thr-207 and Thr-212 by OXSR1/OSR1 and STK39/SPAK downstream of WNK kinases (WNK1, WNK2, WNK3 or WNK4), promoting its activity. As to expression, expressed in many tissues.

It is found in the basolateral cell membrane. The enzyme catalyses K(+)(out) + 2 chloride(out) + Na(+)(out) = K(+)(in) + 2 chloride(in) + Na(+)(in). Its activity is regulated as follows. Activated following phosphorylation by OXSR1/OSR1 and STK39/SPAK downstream of WNK kinases (WNK1, WNK2, WNK3 or WNK4). Inhibited by bumetanide. Inhibited by furosemide. Functionally, cation-chloride cotransporter which mediates the electroneutral transport of chloride, potassium and/or sodium ions across the membrane. Plays a vital role in the regulation of ionic balance and cell volume. The chain is Solute carrier family 12 member 2 (SLC12A2) from Homo sapiens (Human).